A 193-amino-acid polypeptide reads, in one-letter code: Glycerol-3-phosphate acyltransferase (193 aa).

Transmembrane regions (helical) follow at residues 2–22 (AFII…AVIV), 51–71 (QAAF…VLIA), 78–98 (GVSL…PVYF), 112–132 (VLLG…VIVV), and 154–174 (IIAG…LIIW).

This sequence belongs to the PlsY family. As to quaternary structure, probably interacts with PlsX.

Its subcellular location is the cell inner membrane. The catalysed reaction is an acyl phosphate + sn-glycerol 3-phosphate = a 1-acyl-sn-glycero-3-phosphate + phosphate. Its pathway is lipid metabolism; phospholipid metabolism. Functionally, catalyzes the transfer of an acyl group from acyl-phosphate (acyl-PO(4)) to glycerol-3-phosphate (G3P) to form lysophosphatidic acid (LPA). This enzyme utilizes acyl-phosphate as fatty acyl donor, but not acyl-CoA or acyl-ACP. In Coxiella burnetii (strain CbuK_Q154) (Coxiella burnetii (strain Q154)), this protein is Glycerol-3-phosphate acyltransferase.